The sequence spans 60 residues: Large ribosomal subunit protein bL32 (60 aa).

A disordered region spans residues 1 to 21 (MAVPARHTSKAKKNKRRTHYK). A compositionally biased stretch (basic residues) spans 7 to 20 (HTSKAKKNKRRTHY).

This sequence belongs to the bacterial ribosomal protein bL32 family.

The sequence is that of Large ribosomal subunit protein bL32 from Streptococcus uberis (strain ATCC BAA-854 / 0140J).